Consider the following 195-residue polypeptide: DnaJ homolog subfamily C member 5 (195 aa).

In terms of domain architecture, J spans 13-82; the sequence is GDSLYIVLGL…RNIYDKYGSL (70 aa). The interval 162-195 is disordered; that stretch reads DMEKEGDGAIVVQPTSATETTQLTSDSHPSYHTE. Positions 174–189 are enriched in polar residues; sequence QPTSATETTQLTSDSH.

Post-translationally, palmitoylated. Palmitoylation occurs probably in the cysteine-rich domain and regulates DNAJC5 stable membrane attachment.

It localises to the cytoplasm. It is found in the cytosol. Its subcellular location is the membrane. The protein resides in the cytoplasmic vesicle. The protein localises to the secretory vesicle. It localises to the chromaffin granule membrane. It is found in the melanosome. Its subcellular location is the cell membrane. Its function is as follows. May have an important role in presynaptic function. May be involved in calcium-dependent neurotransmitter release at nerve endings. The chain is DnaJ homolog subfamily C member 5 from Tetronarce californica (Pacific electric ray).